A 111-amino-acid chain; its full sequence is Large ribosomal subunit protein eL31 (111 aa).

It belongs to the eukaryotic ribosomal protein eL31 family.

This chain is Large ribosomal subunit protein eL31 (RPL31), found in Encephalitozoon cuniculi (strain GB-M1) (Microsporidian parasite).